The primary structure comprises 450 residues: Phosphoglucosamine mutase (450 aa).

The active-site Phosphoserine intermediate is the serine 102. Mg(2+) is bound by residues serine 102, aspartate 243, aspartate 245, and aspartate 247. Serine 102 carries the post-translational modification Phosphoserine.

The protein belongs to the phosphohexose mutase family. Mg(2+) serves as cofactor. Activated by phosphorylation.

It catalyses the reaction alpha-D-glucosamine 1-phosphate = D-glucosamine 6-phosphate. Functionally, catalyzes the conversion of glucosamine-6-phosphate to glucosamine-1-phosphate. The protein is Phosphoglucosamine mutase of Rhizobium etli (strain CIAT 652).